Consider the following 118-residue polypeptide: uncharacterized protein (118 aa).

Residues 1-26 (MTKLKMLSMLTVMIASLFIFSSQALA) form the signal peptide. In terms of domain architecture, SH3b spans 30-104 (FTVSTSSGAP…VNIGYVSDTY (75 aa)).

The protein to B.subtilis YraI.

This is an uncharacterized protein from Bacillus subtilis (strain 168).